The primary structure comprises 410 residues: MATHVAIIGNGVGGFTTAQALRAEGFEGRISLIGDEPHLPYDRPSLSKAVLDGSLERPPILAEADWYGEARIDMLTGPEVTALDVQTRTISLDDGTTLSADAIVIATGSRARTMALPGSQLPGVVTLRTYGDVQVLRDSWTSATRLLIVGGGLIGCEVATTARKLGLSVTILEAGDELLVRVLGRRIGAWLRGLLTELGVQVELGTGVVGFSGEGQLEQVMASDGRSFVADSALICVGAEPADQLARQAGLACDRGVIVDHCGATLAKGVFAVGDVASWPLRAGGRRSLETYMNAQRQAAAVAAAILGKNVSAPQLPVSWTEIAGHRMQMAGDIEGPGDFVSRGMPGSGAALLFRLQERRIQAVVAVDAPRDFALATRLVEARAAIEPARLADLSNSMRDFVRANEGDLT.

An FAD-binding site is contributed by 4–35; sequence HVAIIGNGVGGFTTAQALRAEGFEGRISLIGD. An NAD(+)-binding site is contributed by 145 to 173; the sequence is RLLIVGGGLIGCEVATTARKLGLSVTILE.

It belongs to the bacterial ring-hydroxylating dioxygenase ferredoxin reductase family. As to quaternary structure, this dioxygenase system consists of four proteins: the two subunits of the hydroxylase component (todC1 and todC2), a ferredoxin (TodB) and a ferredoxin reductase (TodA). Requires FAD as cofactor.

It carries out the reaction 2 reduced [2Fe-2S]-[ferredoxin] + NAD(+) + H(+) = 2 oxidized [2Fe-2S]-[ferredoxin] + NADH. The protein operates within xenobiotic degradation; toluene degradation. Part of the electron transfer component of toluene 1,2-dioxygenase, transfers electrons from ferredoxin (TodB) to NADH. The chain is Toluene 1,2-dioxygenase system ferredoxin--NAD(+) reductase component (todA) from Pseudomonas putida (strain ATCC 700007 / DSM 6899 / JCM 31910 / BCRC 17059 / LMG 24140 / F1).